The chain runs to 376 residues: Phosphoserine aminotransferase (376 aa).

Residue R46 participates in L-glutamate binding. Pyridoxal 5'-phosphate-binding positions include 80–81 (AT), F104, T150, D172, and Q195. K196 is subject to N6-(pyridoxal phosphate)lysine. 247–248 (NT) is a binding site for pyridoxal 5'-phosphate.

Belongs to the class-V pyridoxal-phosphate-dependent aminotransferase family. SerC subfamily. In terms of assembly, homodimer. It depends on pyridoxal 5'-phosphate as a cofactor.

The protein localises to the cytoplasm. The enzyme catalyses O-phospho-L-serine + 2-oxoglutarate = 3-phosphooxypyruvate + L-glutamate. The catalysed reaction is 4-(phosphooxy)-L-threonine + 2-oxoglutarate = (R)-3-hydroxy-2-oxo-4-phosphooxybutanoate + L-glutamate. It functions in the pathway amino-acid biosynthesis; L-serine biosynthesis; L-serine from 3-phospho-D-glycerate: step 2/3. The protein operates within cofactor biosynthesis; pyridoxine 5'-phosphate biosynthesis; pyridoxine 5'-phosphate from D-erythrose 4-phosphate: step 3/5. In terms of biological role, catalyzes the reversible conversion of 3-phosphohydroxypyruvate to phosphoserine and of 3-hydroxy-2-oxo-4-phosphonooxybutanoate to phosphohydroxythreonine. This chain is Phosphoserine aminotransferase, found in Corynebacterium glutamicum (strain R).